Here is a 209-residue protein sequence, read N- to C-terminus: Large ribosomal subunit protein uL3 (209 aa).

The tract at residues 119 to 145 is disordered; the sequence is AIKRHGQSRGPMSHGSHFHRAPGSVGM.

This sequence belongs to the universal ribosomal protein uL3 family. Part of the 50S ribosomal subunit. Forms a cluster with proteins L14 and L19.

Functionally, one of the primary rRNA binding proteins, it binds directly near the 3'-end of the 23S rRNA, where it nucleates assembly of the 50S subunit. This Staphylococcus aureus (strain COL) protein is Large ribosomal subunit protein uL3.